The following is a 343-amino-acid chain: Protein RecA (343 aa).

64–71 (GPESSGKT) is a binding site for ATP.

Belongs to the RecA family.

The protein localises to the cytoplasm. In terms of biological role, can catalyze the hydrolysis of ATP in the presence of single-stranded DNA, the ATP-dependent uptake of single-stranded DNA by duplex DNA, and the ATP-dependent hybridization of homologous single-stranded DNAs. It interacts with LexA causing its activation and leading to its autocatalytic cleavage. This chain is Protein RecA, found in Acidiphilium cryptum (strain JF-5).